We begin with the raw amino-acid sequence, 195 residues long: N-(5'-phosphoribosyl)anthranilate isomerase (195 aa).

Belongs to the TrpF family.

The catalysed reaction is N-(5-phospho-beta-D-ribosyl)anthranilate = 1-(2-carboxyphenylamino)-1-deoxy-D-ribulose 5-phosphate. It functions in the pathway amino-acid biosynthesis; L-tryptophan biosynthesis; L-tryptophan from chorismate: step 3/5. This is N-(5'-phosphoribosyl)anthranilate isomerase from Streptococcus gordonii (strain Challis / ATCC 35105 / BCRC 15272 / CH1 / DL1 / V288).